The sequence spans 430 residues: RNA pseudouridine synthase 2, chloroplastic (430 aa).

Residues 1 to 43 constitute a chloroplast transit peptide; that stretch reads MLSISQLPSFSLTTAKSLRYPSSPSSSLSIFFSFFPKVSNFVR. Residues 82 to 155 form the S4 RNA-binding domain; the sequence is IRLDSWISSR…IPLDIVYEDK (74 aa). The interval 195 to 222 is disordered; the sequence is SNSEEDDDSDEETFSDDEEMTTSPSSYA. Positions 196–214 are enriched in acidic residues; it reads NSEEDDDSDEETFSDDEEM. D234 is a catalytic residue.

Belongs to the pseudouridine synthase RluA family.

It is found in the plastid. The protein resides in the chloroplast. It carries out the reaction a uridine in RNA = a pseudouridine in RNA. The polypeptide is RNA pseudouridine synthase 2, chloroplastic (Arabidopsis thaliana (Mouse-ear cress)).